Here is a 669-residue protein sequence, read N- to C-terminus: Putative transcription factor SOX-14 (669 aa).

The span at 1 to 12 (MIAKPNQATTEP) shows a compositional bias: polar residues. 3 disordered regions span residues 1–149 (MIAK…EMTL), 254–336 (YKYR…PKYE), and 419–439 (SSLTQSQHNQSDPTAGLMDNI). Positions 17-37 (RPGTVPTVPATTPARPATITI) are enriched in low complexity. Positions 52 to 71 (TLPPFSPSPSPASSPSPAPA) are enriched in pro residues. Positions 75 to 84 (GAQKTQSQAA) are enriched in polar residues. Over residues 88 to 105 (PAAVASPSAPVAAAAPKT) the composition is skewed to low complexity. Residues 130 to 145 (RESEMDGERSPSHSGH) are compositionally biased toward basic and acidic residues. Positions 187–255 (IKRPMNAFMV…LHMIEYPNYK (69 aa)) form a DNA-binding region, HMG box. The span at 284–294 (TTNNNNSLTTL) shows a compositional bias: low complexity. Residues 295–318 (AINGTTTAGRKSKRSTSTCQSGSA) are compositionally biased toward polar residues. The segment covering 322-336 (LRNDSGDTSSKPKYE) has biased composition (basic and acidic residues). Residues 419-431 (SSLTQSQHNQSDP) are compositionally biased toward polar residues.

It localises to the nucleus. This chain is Putative transcription factor SOX-14 (Sox14), found in Drosophila melanogaster (Fruit fly).